The sequence spans 248 residues: tRNA (guanine-N(7)-)-methyltransferase (248 aa).

Residues glycine 70, 93 to 94, 129 to 130, and leucine 149 each bind S-adenosyl-L-methionine; these read EI and NA. Aspartate 152 is an active-site residue. Residue 227–229 participates in S-adenosyl-L-methionine binding; that stretch reads SEE.

This sequence belongs to the class I-like SAM-binding methyltransferase superfamily. TrmB family.

The protein localises to the nucleus. It catalyses the reaction guanosine(46) in tRNA + S-adenosyl-L-methionine = N(7)-methylguanosine(46) in tRNA + S-adenosyl-L-homocysteine. Its pathway is tRNA modification; N(7)-methylguanine-tRNA biosynthesis. Catalyzes the formation of N(7)-methylguanine at position 46 (m7G46) in tRNA. This Drosophila mojavensis (Fruit fly) protein is tRNA (guanine-N(7)-)-methyltransferase.